The following is a 134-amino-acid chain: ATP synthase epsilon chain, chloroplastic (134 aa).

It belongs to the ATPase epsilon chain family. F-type ATPases have 2 components, CF(1) - the catalytic core - and CF(0) - the membrane proton channel. CF(1) has five subunits: alpha(3), beta(3), gamma(1), delta(1), epsilon(1). CF(0) has three main subunits: a, b and c.

Its subcellular location is the plastid. It localises to the chloroplast thylakoid membrane. Its function is as follows. Produces ATP from ADP in the presence of a proton gradient across the membrane. The chain is ATP synthase epsilon chain, chloroplastic from Spinacia oleracea (Spinach).